Reading from the N-terminus, the 144-residue chain is Granulocyte-macrophage colony-stimulating factor (144 aa).

A signal peptide spans Met1–Ser17. O-linked (GalNAc...) serine glycans are attached at residues Ser22, Ser24, and Ser26. Thr27 is a glycosylation site (O-linked (GalNAc...) threonine; partial). Residues Asn44 and Asn54 are each glycosylated (N-linked (GlcNAc...) asparagine). Disulfide bonds link Cys71/Cys113 and Cys105/Cys138.

This sequence belongs to the GM-CSF family. Monomer. The signaling GM-CSF receptor complex is a dodecamer of two head-to-head hexamers of two alpha, two beta, and two ligand subunits.

Its subcellular location is the secreted. Its function is as follows. Cytokine that stimulates the growth and differentiation of hematopoietic precursor cells from various lineages, including granulocytes, macrophages, eosinophils and erythrocytes. This Homo sapiens (Human) protein is Granulocyte-macrophage colony-stimulating factor (CSF2).